Reading from the N-terminus, the 372-residue chain is Tyrosine--tRNA ligase (372 aa).

L-tyrosine is bound by residues tyrosine 37, tyrosine 169, glutamine 173, aspartate 176, and glutamine 191. Residues lysine 246–serine 250 carry the 'KMSKS' region motif. Lysine 249 provides a ligand contact to ATP.

This sequence belongs to the class-I aminoacyl-tRNA synthetase family. TyrS type 4 subfamily. As to quaternary structure, homodimer.

It is found in the cytoplasm. The enzyme catalyses tRNA(Tyr) + L-tyrosine + ATP = L-tyrosyl-tRNA(Tyr) + AMP + diphosphate + H(+). Its function is as follows. Catalyzes the attachment of tyrosine to tRNA(Tyr) in a two-step reaction: tyrosine is first activated by ATP to form Tyr-AMP and then transferred to the acceptor end of tRNA(Tyr). In Pyrobaculum calidifontis (strain DSM 21063 / JCM 11548 / VA1), this protein is Tyrosine--tRNA ligase.